The primary structure comprises 288 residues: ATP synthase gamma chain (288 aa).

This sequence belongs to the ATPase gamma chain family. As to quaternary structure, F-type ATPases have 2 components, CF(1) - the catalytic core - and CF(0) - the membrane proton channel. CF(1) has five subunits: alpha(3), beta(3), gamma(1), delta(1), epsilon(1). CF(0) has three main subunits: a, b and c.

Its subcellular location is the cell inner membrane. Produces ATP from ADP in the presence of a proton gradient across the membrane. The gamma chain is believed to be important in regulating ATPase activity and the flow of protons through the CF(0) complex. This chain is ATP synthase gamma chain, found in Legionella pneumophila (strain Corby).